A 708-amino-acid chain; its full sequence is B-cell lymphoma 6 protein homolog (708 aa).

Residues 32 to 99 (TDVVIIVNRE…MYTSRLNLRE (68 aa)) form the BTB domain. Residues 303 to 317 (AKEEERTSSEDEISQ) are compositionally biased toward basic and acidic residues. Disordered stretches follow at residues 303–371 (AKEE…KSPT) and 431–470 (PTKM…QSPL). Composition is skewed to polar residues over residues 333 to 370 (SPQS…TKSP) and 431 to 454 (PTKM…NIVN). C2H2-type zinc fingers lie at residues 520 to 543 (FFCN…LQVH), 548 to 570 (YKCD…KTVH), 576 to 598 (YRCN…TRIH), 604 to 626 (YKCE…VLIH), 632 to 654 (YPCE…LRIH), and 660 to 683 (YHCE…RQKH).

Its subcellular location is the nucleus. In terms of biological role, transcriptional repressor mainly required for germinal center (GC) formation and antibody affinity maturation which has different mechanisms of action specific to the lineage and biological functions. Forms complexes with different corepressors and histone deacetylases to repress the transcriptional expression of different subsets of target genes. Represses its target genes by binding directly to the DNA sequence 5'-TTCCTAGAA-3' (BCL6-binding site) or indirectly by repressing the transcriptional activity of transcription factors. In GC B-cells, represses genes that function in differentiation, inflammation, apoptosis and cell cycle control, also autoregulates its transcriptional expression and up-regulates, indirectly, the expression of some genes important for GC reactions, such as AICDA, through the repression of microRNAs expression. An important function is to allow GC B-cells to proliferate very rapidly in response to T-cell dependent antigens and tolerate the physiological DNA breaks required for immunglobulin class switch recombination and somatic hypermutation without inducing a p53/TP53-dependent apoptotic response. In follicular helper CD4(+) T-cells (T(FH) cells), promotes the expression of T(FH)-related genes but inhibits the differentiation of T(H)1, T(H)2 and T(H)17 cells. Also required for the establishment and maintenance of immunological memory for both T- and B-cells. Suppresses macrophage proliferation through competition with STAT5 for STAT-binding motifs binding on certain target genes, such as CCL2 and CCND2. In response to genotoxic stress, controls cell cycle arrest in GC B-cells in both p53/TP53-dependedent and -independent manners. Besides, also controls neurogenesis through the alteration of the composition of NOTCH-dependent transcriptional complexes at selective NOTCH targets, such as HES5, including the recruitment of the deacetylase SIRT1 and resulting in an epigenetic silencing leading to neuronal differentiation. The chain is B-cell lymphoma 6 protein homolog from Gallus gallus (Chicken).